Here is a 249-residue protein sequence, read N- to C-terminus: Probable proteasome subunit alpha type-2 (249 aa).

This sequence belongs to the peptidase T1A family. The 26S proteasome consists of a 20S proteasome core and two 19S regulatory subunits. The 20S proteasome core is composed of 28 subunits that are arranged in four stacked rings, resulting in a barrel-shaped structure. The two end rings are each formed by seven alpha subunits, and the two central rings are each formed by seven beta subunits. The catalytic chamber with the active sites is on the inside of the barrel.

Its subcellular location is the cytoplasm. The protein resides in the nucleus. In terms of biological role, the proteasome is a multicatalytic proteinase complex which is characterized by its ability to cleave peptides with Arg, Phe, Tyr, Leu, and Glu adjacent to the leaving group at neutral or slightly basic pH. The proteasome has an ATP-dependent proteolytic activity. This chain is Probable proteasome subunit alpha type-2 (pca-2), found in Neurospora crassa (strain ATCC 24698 / 74-OR23-1A / CBS 708.71 / DSM 1257 / FGSC 987).